Here is a 394-residue protein sequence, read N- to C-terminus: MSKEKFQRTKLHINVGTIGHVDHGKTTLTAAITAVLAKAYGGNALAFDQIDNAPEEKARGITINTSHVEYDTKNRHYAHVDCPGHADYVKNMITGAAQMDGAILVVAATDGPMPQTREHILLARQVGVPYIIVFINKCDMVDDSELLELVEIEVRELLSQYEFPGENTPIIRGSALKALEHDVDWTSKIIELAEVLDSYIPEPKRAIDKPFLLPIEDVFSISGRGTVVTGRVERGILKVGEEVEIIGIKNTTKTTCTGVEMFRKLLDEGRAGENIGVLLRGVKRDDVERGQVLAKPGSIKPHTKFASEVYILNKDEGGRHTPFFKGYRPQFYFRTTDVTGTIELPIDVEMVMPGDNIKMIVNLIAPIAMDQGLRFAIREGGRTVGAGIVTDIIE.

The tr-type G domain maps to 10–204; that stretch reads KLHINVGTIG…VLDSYIPEPK (195 aa). Residues 19–26 are G1; it reads GHVDHGKT. 19-26 provides a ligand contact to GTP; it reads GHVDHGKT. Thr26 is a Mg(2+) binding site. The G2 stretch occupies residues 60-64; it reads GITIN. Residues 81-84 are G3; that stretch reads DCPG. Residues 81–85 and 136–139 contribute to the GTP site; these read DCPGH and NKCD. The tract at residues 136 to 139 is G4; sequence NKCD. Residues 174–176 are G5; sequence SAL.

This sequence belongs to the TRAFAC class translation factor GTPase superfamily. Classic translation factor GTPase family. EF-Tu/EF-1A subfamily. In terms of assembly, monomer.

The protein localises to the cytoplasm. It catalyses the reaction GTP + H2O = GDP + phosphate + H(+). Its function is as follows. GTP hydrolase that promotes the GTP-dependent binding of aminoacyl-tRNA to the A-site of ribosomes during protein biosynthesis. This Baumannia cicadellinicola subsp. Homalodisca coagulata protein is Elongation factor Tu.